The following is a 405-amino-acid chain: Serpin H1 (405 aa).

Residues 1–15 (MQIFLVLALCGLAAA) form the signal peptide. 2 N-linked (GlcNAc...) asparagine glycosylation sites follow: asparagine 107 and asparagine 112. Residues 402-405 (RDEL) carry the Prevents secretion from ER motif.

Belongs to the serpin family.

The protein localises to the endoplasmic reticulum lumen. In terms of biological role, binds specifically to collagen. Could be involved as a chaperone in the biosynthetic pathway of collagen. This is Serpin H1 (SERPINH1) from Gallus gallus (Chicken).